The following is a 147-amino-acid chain: Hemoglobin subunit epsilon (147 aa).

One can recognise a Globin domain in the interval 3–147 (HFTAEEKAAV…VAIALAHKYH (145 aa)). Phosphoserine is present on residues S14 and S51. Heme b-binding residues include H64 and H93.

The protein belongs to the globin family. In terms of assembly, heterotetramer of two alpha chains and two epsilon chains in early embryonic hemoglobin Gower-2; two zeta chains and two epsilon chains in early embryonic hemoglobin Gower-1. In terms of tissue distribution, red blood cells.

Its function is as follows. The epsilon chain is a beta-type chain of early mammalian embryonic hemoglobin. This Pan paniscus (Pygmy chimpanzee) protein is Hemoglobin subunit epsilon (HBE1).